The following is a 352-amino-acid chain: C-C chemokine receptor type 5 (352 aa).

Over 1–30 the chain is Extracellular; that stretch reads MDYQVSSPTYDIDYYTSEPCQKINVKQIAA. Position 3 is a sulfotyrosine (tyrosine 3). 2 O-linked (GalNAc...) serine glycosylation sites follow: serine 6 and serine 7. Sulfotyrosine occurs at positions 10, 14, and 15. 2 cysteine pairs are disulfide-bonded: cysteine 20/cysteine 269 and cysteine 101/cysteine 178. A helical membrane pass occupies residues 31–58; it reads RLLPPLYSLVFIFGFVGNMLVILILINC. Residues 59 to 68 lie on the Cytoplasmic side of the membrane; that stretch reads KRLKSMTDIY. A helical transmembrane segment spans residues 69-89; it reads LLNLAISDLFFLLTVPFWAHY. Residues 90–102 are Extracellular-facing; the sequence is AAAQWDFGNTMCQ. The helical transmembrane segment at 103-124 threads the bilayer; it reads LLTGLYFIGFFSGIFFIILLTI. The Cytoplasmic portion of the chain corresponds to 125-141; sequence DRYLAIVHAVFALKART. A helical membrane pass occupies residues 142 to 166; it reads VTFGVVTSVITWVVAVFASLPGIIF. Topologically, residues 167-198 are extracellular; the sequence is TRSQKEGLHYTCSSHFPYSQYQFWKNFQTLKI. The helical transmembrane segment at 199 to 218 threads the bilayer; sequence VILGLVLPLLVMVICYSGIL. The Cytoplasmic segment spans residues 219-235; that stretch reads KTLLRCRNEKKRHRAVR. Residues 236 to 260 traverse the membrane as a helical segment; that stretch reads LIFTIMIVYFLFWAPYNIVLLLNTF. The Extracellular segment spans residues 261-277; the sequence is QEFFGLNNCSSSNRLDQ. Residues 278-301 form a helical membrane-spanning segment; the sequence is AMQVTETLGMTHCCINPIIYAFVG. The Cytoplasmic segment spans residues 302-352; it reads EKFRNYLLVFFQKHIAKHFCKCCSIFQQEAPERASSVYTRSTGEQEISVGL. S-palmitoyl cysteine attachment occurs at residues cysteine 321, cysteine 323, and cysteine 324. Phosphoserine; by BARK1 occurs at positions 336, 337, 342, and 349.

The protein belongs to the G-protein coupled receptor 1 family. Interacts with PRAF2. Efficient ligand binding to CCL3/MIP-1alpha and CCL4/MIP-1beta requires sulfation, O-glycosylation and sialic acid modifications. Glycosylation on Ser-6 is required for efficient binding of CCL4. Interacts with GRK2. Interacts with ARRB1 and ARRB2. Interacts with CNIH4. Interacts with S100A4; this interaction stimulates T-lymphocyte chemotaxis. In terms of processing, sulfated on at least 2 of the N-terminal tyrosines. Sulfation is required for efficient binding of the chemokines, CCL3 and CCL4. Palmitoylation in the C-terminal is important for cell surface expression. Post-translationally, phosphorylation on serine residues in the C-terminal is stimulated by binding CC chemokines especially by APO-RANTES. In terms of processing, O-glycosylated, but not N-glycosylated. Ser-6 appears to be the major site even if Ser-7 may be also O-glycosylated. Also sialylated glycans present which contribute to chemokine binding. Thr-16 and Ser-17 may also be glycosylated and, if so, with small moieties such as a T-antigen.

It localises to the cell membrane. Its function is as follows. Receptor for a number of inflammatory CC-chemokines including CCL3/MIP-1-alpha, CCL4/MIP-1-beta and RANTES and subsequently transduces a signal by increasing the intracellular calcium ion level. May play a role in the control of granulocytic lineage proliferation or differentiation. Participates in T-lymphocyte migration to the infection site by acting as a chemotactic receptor. This chain is C-C chemokine receptor type 5 (CCR5), found in Symphalangus syndactylus (Siamang).